The chain runs to 395 residues: tRNA-specific 2-thiouridylase MnmA (395 aa).

ATP contacts are provided by residues 7–14 (GLSGGVDS) and methionine 33. The interval 95–97 (NPD) is interaction with target base in tRNA. The Nucleophile role is filled by cysteine 100. A disulfide bond links cysteine 100 and cysteine 200. Residue glycine 124 participates in ATP binding. The tract at residues 150–152 (KDQ) is interaction with tRNA. Cysteine 200 (cysteine persulfide intermediate) is an active-site residue. Positions 346–347 (RY) are interaction with tRNA.

The protein belongs to the MnmA/TRMU family.

The protein resides in the cytoplasm. The catalysed reaction is S-sulfanyl-L-cysteinyl-[protein] + uridine(34) in tRNA + AH2 + ATP = 2-thiouridine(34) in tRNA + L-cysteinyl-[protein] + A + AMP + diphosphate + H(+). Catalyzes the 2-thiolation of uridine at the wobble position (U34) of tRNA, leading to the formation of s(2)U34. The chain is tRNA-specific 2-thiouridylase MnmA from Christiangramia forsetii (strain DSM 17595 / CGMCC 1.15422 / KT0803) (Gramella forsetii).